Reading from the N-terminus, the 446-residue chain is Cytochrome P450 monooxygenase ptmP (446 aa).

A helical transmembrane segment spans residues 19–39 (VTVIWILMALVLLAYLILPNP). A heme-binding site is contributed by C385. N-linked (GlcNAc...) asparagine glycosylation occurs at N430.

It belongs to the cytochrome P450 family. Requires heme as cofactor.

Its subcellular location is the membrane. Its pathway is secondary metabolite biosynthesis. Functionally, cytochrome P450 monooxygenase; part of the gene cluster that mediates the biosynthesis of the indole diterpenes penitrems. The geranylgeranyl diphosphate (GGPP) synthase ptmG catalyzes the first step in penitrem biosynthesis via conversion of farnesyl pyrophosphate and isopentyl pyrophosphate into geranylgeranyl pyrophosphate (GGPP). Condensation of indole-3-glycerol phosphate with GGPP by the prenyl transferase ptmC then forms 3-geranylgeranylindole (3-GGI). Epoxidation by the FAD-dependent monooxygenase ptmM leads to a epoxidized-GGI that is substrate of the terpene cyclase ptmB for cyclization to yield paspaline. Paspaline is subsequently converted to 13-desoxypaxilline by the cytochrome P450 monooxygenase ptmP, the latter being then converted to paxilline by the cytochrome P450 monooxygenase ptmQ. Paxilline is converted to beta-paxitriol via C-10 ketoreduction by the short-chain dehydrogenase ptmH which can be monoprenylated at the C-20 by the indole diterpene prenyltransferase ptmD. A two-step elimination (acetylation and elimination) process performed by the O-acetyltransferase ptmV and ptmI leads to the production of the prenylated form of penijanthine. The FAD-linked oxidoreductase ptmO then converts the prenylated form of penijanthine into PC-M5 which is in turn transformed into PC-M4 by the aromatic dimethylallyltransferase ptmE. Five sequential oxidative transformations performed by the cytochrome P450 monooxygenases ptmK, ptmU, ptmL, ptmN and ptmJ yield the various penitrem compounds. PtmK, ptmU and ptmM are involved in the formation of the key bicyclic ring of penitrem C via the formation of the intermediates secopenitrem D and penitrem D. PtmL catalyzes the epoxidation of penitrem D and C to yield penitrem B and F, respectively. PtmJ catalyzes the last benzylic hydroxylation to convert penitrem B to prenitrem E and penitrem F to penitrem A. This Penicillium ochrochloron protein is Cytochrome P450 monooxygenase ptmP.